A 398-amino-acid chain; its full sequence is MAGFKTLDDLKDVAGKRVLLRVDLNVPVKDGEVTDTTRIERVAPTITELSDKGAKVILLAHFGRPKGKPDAEASLQPIAHAVEAVLDRRVHFASSCIGEPAKKAVDEMTGGDILLLENTRFHAGEEKNDPEFTKALAANGDIYVNDAFSAAHRAHASTEGLAHLLPAYAGRTIQAELEALQRGLGDPKRPVVAIVGGAKVSTKIDLLTNLVKKVDCLVIGGGMANTFLAARGTSVGKSLCEHDLRETAKQIMIDAAEAGCAIILPVDAVVARKFEAGAETETVDIDAVPEDAMILDVGPKSVEKVKEWLDRADTLVWNGPLGAFELSPFDKATMEVAKYAARRTRESLLVSVAGGGDTVAALNQADVSDDFSYVSTAGGAFLEWMEGKDLPGVAALQK.

Residues 23–25 (DLN), arginine 38, 61–64 (HFGR), arginine 120, and arginine 153 each bind substrate. ATP-binding positions include lysine 203, glutamate 325, and 355–358 (GGDT).

The protein belongs to the phosphoglycerate kinase family. Monomer.

Its subcellular location is the cytoplasm. The enzyme catalyses (2R)-3-phosphoglycerate + ATP = (2R)-3-phospho-glyceroyl phosphate + ADP. Its pathway is carbohydrate degradation; glycolysis; pyruvate from D-glyceraldehyde 3-phosphate: step 2/5. The chain is Phosphoglycerate kinase from Chelativorans sp. (strain BNC1).